The following is a 304-amino-acid chain: Gamma-gliadin B-I (304 aa).

The signal sequence occupies residues 1-23; sequence MKTFLVFALIAVVATSAIAQMET. The disordered stretch occupies residues 32-92; the sequence is PWQQQPLPPQ…PFSQQQQPVL (61 aa). The span at 41 to 92 shows a compositional bias: low complexity; that stretch reads QQSFSQQPPFSQQQQQPLPQQPSFSQQQPPFSQQQPILSQQPPFSQQQQPVL.

It belongs to the gliadin/glutenin family.

Gliadin is the major seed storage protein in wheat. The protein is Gamma-gliadin B-I of Triticum aestivum (Wheat).